We begin with the raw amino-acid sequence, 196 residues long: uncharacterized protein (196 aa).

The HTH tetR-type domain occupies arginine 7–tryptophan 67. The segment at residues serine 30–phenylalanine 49 is a DNA-binding region (H-T-H motif).

This is an uncharacterized protein from Lactococcus lactis subsp. lactis (Streptococcus lactis).